A 188-amino-acid polypeptide reads, in one-letter code: Putative manganese efflux pump MntP (188 aa).

6 helical membrane passes run Ile-2 to Val-22, Leu-39 to Leu-59, Ile-67 to Ile-87, Ile-107 to Leu-127, Val-129 to Gly-149, and Leu-166 to Phe-186.

Belongs to the MntP (TC 9.B.29) family.

It localises to the cell membrane. Its function is as follows. Probably functions as a manganese efflux pump. The chain is Putative manganese efflux pump MntP from Desulfitobacterium hafniense (strain Y51).